A 381-amino-acid chain; its full sequence is Prolargin (381 aa).

The signal sequence occupies residues 1 to 21; it reads MRSSLCWLLTLLLILATAAQG. Residues 19–65 are disordered; the sequence is AQGQPTRRPRPRPRPRPRPRLRPTPSFPQPDEPTEPTDLPPPLPPGP. Basic residues predominate over residues 25–39; the sequence is RRPRPRPRPRPRPRL. The span at 56–65 shows a compositional bias: pro residues; that stretch reads DLPPPLPPGP. LRR repeat units follow at residues 94–113, 114–137, 138–161, 162–182, 183–206, 207–232, 233–253, 254–277, 278–302, 303–322, 323–361, and 362–381; these read RKVP…NNFI, TELP…NNRI, RKVD…KNQL, EEVP…QNQI, SRIP…HNKL, SDGV…HNTL, RKMP…SNRI, EAIP…YNQL, SDRG…HNRI, SSVP…NNSI, EKIN…GNYL, and KPPI…SVVI. An N-linked (GlcNAc...) asparagine glycan is attached at Asn123. N-linked (GlcNAc...) asparagine glycosylation is found at Asn288, Asn319, and Asn326. Cys331 and Cys372 form a disulfide bridge.

This sequence belongs to the small leucine-rich proteoglycan (SLRP) family. SLRP class II subfamily. In terms of assembly, binds the basement membrane heparan sulfate proteoglycan perlecan and triple helical collagens type I and type II. Glycosylated; contains heparan sulfate.

The protein localises to the secreted. The protein resides in the extracellular space. It localises to the extracellular matrix. Its function is as follows. May anchor basement membranes to the underlying connective tissue. In Bos taurus (Bovine), this protein is Prolargin (PRELP).